The following is a 206-amino-acid chain: MDLTITTLEGKDAGKVKLNEEIFGLDPRDDILQRVVRWQLARRQQGSHKAQGRGDVSRTGAKMYKQKGTGRARHHSARAPQFRGGGQAHGPVVRSHDHDLPKKVRALGLRHALSAKAKASDLIIIDDLAATEAKTKQLVSQFAKLGLENALVIGGAEIDVNFQRAASNIPNIDVLPVQGINVYDILRRGKLVLSKAAVEALEERFK.

The segment covering 66-77 (QKGTGRARHHSA) has biased composition (basic residues). A disordered region spans residues 66–96 (QKGTGRARHHSARAPQFRGGGQAHGPVVRSH).

It belongs to the universal ribosomal protein uL4 family. Part of the 50S ribosomal subunit.

Its function is as follows. One of the primary rRNA binding proteins, this protein initially binds near the 5'-end of the 23S rRNA. It is important during the early stages of 50S assembly. It makes multiple contacts with different domains of the 23S rRNA in the assembled 50S subunit and ribosome. Forms part of the polypeptide exit tunnel. This chain is Large ribosomal subunit protein uL4, found in Brucella anthropi (strain ATCC 49188 / DSM 6882 / CCUG 24695 / JCM 21032 / LMG 3331 / NBRC 15819 / NCTC 12168 / Alc 37) (Ochrobactrum anthropi).